An 85-amino-acid polypeptide reads, in one-letter code: UPF0297 protein LGAS_0422 (85 aa).

It belongs to the UPF0297 family.

The polypeptide is UPF0297 protein LGAS_0422 (Lactobacillus gasseri (strain ATCC 33323 / DSM 20243 / BCRC 14619 / CIP 102991 / JCM 1131 / KCTC 3163 / NCIMB 11718 / NCTC 13722 / AM63)).